Reading from the N-terminus, the 301-residue chain is Protoheme IX farnesyltransferase (301 aa).

9 helical membrane-spanning segments follow: residues 20–42 (FTELVKIGIVNSNTITAFTGMWL), 55–75 (VDVIFFTIVGSALIVAASGAF), 105–125 (ALMVALVLGVVGTIMLFMTTW), 126–146 (QAGVLGVIGVFLYVVVYSLYA), 150–172 (LVSNTVIGSFSGAVPPLIGWFAV), 176–198 (FSIVPIMLFLVMFCWQPPHFYAI), 227–247 (MFFWVILLTILPFFMFELGIV), 249–269 (VVLATLLNIGWLALSIYGFKM), and 280–300 (FVYSLNYMTILFVAMVVISIF).

It belongs to the UbiA prenyltransferase family. Protoheme IX farnesyltransferase subfamily. Interacts with CtaA.

The protein localises to the cell membrane. The enzyme catalyses heme b + (2E,6E)-farnesyl diphosphate + H2O = Fe(II)-heme o + diphosphate. The protein operates within porphyrin-containing compound metabolism; heme O biosynthesis; heme O from protoheme: step 1/1. Functionally, converts heme B (protoheme IX) to heme O by substitution of the vinyl group on carbon 2 of heme B porphyrin ring with a hydroxyethyl farnesyl side group. This Listeria monocytogenes serotype 4b (strain CLIP80459) protein is Protoheme IX farnesyltransferase.